Reading from the N-terminus, the 59-residue chain is Large ribosomal subunit protein bL32 (59 aa).

The span at 1–15 (MAVPKKKTSKSKRDM) shows a compositional bias: basic residues. The interval 1-26 (MAVPKKKTSKSKRDMRRATWNRKAAA) is disordered.

Belongs to the bacterial ribosomal protein bL32 family.

The chain is Large ribosomal subunit protein bL32 from Cyanothece sp. (strain PCC 7425 / ATCC 29141).